The primary structure comprises 185 residues: Thymidine kinase (185 aa).

ATP is bound at residue 8–15 (GPMYSGKT). Glu85 acts as the Proton acceptor in catalysis. Residue Phe117 coordinates substrate. Zn(2+)-binding residues include Cys142 and Cys145. Residue 161–165 (IIEIG) coordinates substrate. 2 residues coordinate Zn(2+): Cys174 and Cys177.

The protein belongs to the thymidine kinase family.

It carries out the reaction thymidine + ATP = dTMP + ADP + H(+). The chain is Thymidine kinase (TK) from Choristoneura fumiferana entomopoxvirus (CfEPV).